The sequence spans 201 residues: Probable nicotinate-nucleotide adenylyltransferase (201 aa).

This sequence belongs to the NadD family.

The catalysed reaction is nicotinate beta-D-ribonucleotide + ATP + H(+) = deamido-NAD(+) + diphosphate. The protein operates within cofactor biosynthesis; NAD(+) biosynthesis; deamido-NAD(+) from nicotinate D-ribonucleotide: step 1/1. Its function is as follows. Catalyzes the reversible adenylation of nicotinate mononucleotide (NaMN) to nicotinic acid adenine dinucleotide (NaAD). The protein is Probable nicotinate-nucleotide adenylyltransferase of Clostridium botulinum (strain Kyoto / Type A2).